The primary structure comprises 179 residues: ATP synthase subunit delta (179 aa).

It belongs to the ATPase delta chain family. F-type ATPases have 2 components, F(1) - the catalytic core - and F(0) - the membrane proton channel. F(1) has five subunits: alpha(3), beta(3), gamma(1), delta(1), epsilon(1). F(0) has three main subunits: a(1), b(2) and c(10-14). The alpha and beta chains form an alternating ring which encloses part of the gamma chain. F(1) is attached to F(0) by a central stalk formed by the gamma and epsilon chains, while a peripheral stalk is formed by the delta and b chains.

It localises to the cell inner membrane. F(1)F(0) ATP synthase produces ATP from ADP in the presence of a proton or sodium gradient. F-type ATPases consist of two structural domains, F(1) containing the extramembraneous catalytic core and F(0) containing the membrane proton channel, linked together by a central stalk and a peripheral stalk. During catalysis, ATP synthesis in the catalytic domain of F(1) is coupled via a rotary mechanism of the central stalk subunits to proton translocation. Functionally, this protein is part of the stalk that links CF(0) to CF(1). It either transmits conformational changes from CF(0) to CF(1) or is implicated in proton conduction. This chain is ATP synthase subunit delta, found in Burkholderia mallei (strain NCTC 10247).